Reading from the N-terminus, the 486-residue chain is Cysteine--tRNA ligase (486 aa).

C29 contributes to the Zn(2+) binding site. Residues 31–41 carry the 'HIGH' region motif; sequence VTVYDYCHLGH. 3 residues coordinate Zn(2+): C217, H242, and E246. Residues 274–278 carry the 'KMSKS' region motif; sequence KMSKS. K277 contacts ATP.

Belongs to the class-I aminoacyl-tRNA synthetase family. In terms of assembly, monomer. It depends on Zn(2+) as a cofactor.

It localises to the cytoplasm. The catalysed reaction is tRNA(Cys) + L-cysteine + ATP = L-cysteinyl-tRNA(Cys) + AMP + diphosphate. This chain is Cysteine--tRNA ligase, found in Thermosynechococcus vestitus (strain NIES-2133 / IAM M-273 / BP-1).